The following is a 202-amino-acid chain: MAGSFAQLAKNAEKKKPSISVSKEPVENPPLKVYQLGDEALRTPANRIVKVDDAIRKLAKDMLITMYSSKGIGLAAPQVGIQKRLLVIDLKFEDPNSPPMVFINPEIISSSATLDTYEEGCLSIPGVYLNVLRPSSIKLSYRDEMGRPKKMNADGLMARCIQHEIDHLNGVCFVDKVTDEEELKKQLNENNFKRSDVIKETN.

The tract at residues 1–24 is disordered; the sequence is MAGSFAQLAKNAEKKKPSISVSKE. Residues Cys-121 and His-163 each contribute to the Fe cation site. Glu-164 is a catalytic residue. Residue His-167 participates in Fe cation binding.

This sequence belongs to the polypeptide deformylase family. Requires Fe(2+) as cofactor.

The catalysed reaction is N-terminal N-formyl-L-methionyl-[peptide] + H2O = N-terminal L-methionyl-[peptide] + formate. In terms of biological role, removes the formyl group from the N-terminal Met of newly synthesized proteins. Requires at least a dipeptide for an efficient rate of reaction. N-terminal L-methionine is a prerequisite for activity but the enzyme has broad specificity at other positions. In Prochlorococcus marinus (strain NATL2A), this protein is Peptide deformylase.